Reading from the N-terminus, the 175-residue chain is NADH-ubiquinone oxidoreductase chain 6 (175 aa).

5 consecutive transmembrane segments (helical) span residues Met1 to Ser21, Ser25 to Met45, Phe47 to Val67, Val88 to Leu108, and Tyr149 to Leu169.

It belongs to the complex I subunit 6 family.

The protein localises to the mitochondrion membrane. It carries out the reaction a ubiquinone + NADH + 5 H(+)(in) = a ubiquinol + NAD(+) + 4 H(+)(out). Core subunit of the mitochondrial membrane respiratory chain NADH dehydrogenase (Complex I) that is believed to belong to the minimal assembly required for catalysis. Complex I functions in the transfer of electrons from NADH to the respiratory chain. The immediate electron acceptor for the enzyme is believed to be ubiquinone. This is NADH-ubiquinone oxidoreductase chain 6 (MT-ND6) from Rhinolophus monoceros (Formosan lesser horseshoe bat).